Reading from the N-terminus, the 164-residue chain is R-phycoerythrin alpha chain (164 aa).

Cys-82 and Cys-139 together coordinate (2R,3E)-phycoerythrobilin.

It belongs to the phycobiliprotein family. Heterodimer of an alpha and a beta chain. Contains two covalently linked bilin chromophores.

The protein localises to the plastid. It localises to the chloroplast thylakoid membrane. In terms of biological role, light-harvesting photosynthetic bile pigment-protein from the phycobiliprotein complex. The sequence is that of R-phycoerythrin alpha chain (cpeA) from Lophosiphonia boldii (Red alga).